The sequence spans 63 residues: Large ribosomal subunit protein uL29 (63 aa).

This sequence belongs to the universal ribosomal protein uL29 family.

The sequence is that of Large ribosomal subunit protein uL29 from Shewanella oneidensis (strain ATCC 700550 / JCM 31522 / CIP 106686 / LMG 19005 / NCIMB 14063 / MR-1).